The following is a 296-amino-acid chain: MANLVLKTDFPDLKLVARGKVRDIYDLGEALLIVTTDRISAFDVIMNEGIPDKGYVLTQISAFWFRQMEDIIPNHIISTEVKDFPAECQKYAADLEGRSMLVKKANPLPAECIVRGYISGSGWKDYKATGSICGIKLPAGLVESDKLEEPIFTPSTKAELGTHDENISFDRMVEMMGKELAGKVRDVTIAIYKRARDIADAKGIIIADTKFEYGIYNGELIIIDECMTPDSSRFWPKDSYKPGGAQPSFDKQFLRDYLETLDWNKTAPAPPLPAEIVKKTGEKYMEALVRLTGKGK.

The protein belongs to the SAICAR synthetase family.

The enzyme catalyses 5-amino-1-(5-phospho-D-ribosyl)imidazole-4-carboxylate + L-aspartate + ATP = (2S)-2-[5-amino-1-(5-phospho-beta-D-ribosyl)imidazole-4-carboxamido]succinate + ADP + phosphate + 2 H(+). It functions in the pathway purine metabolism; IMP biosynthesis via de novo pathway; 5-amino-1-(5-phospho-D-ribosyl)imidazole-4-carboxamide from 5-amino-1-(5-phospho-D-ribosyl)imidazole-4-carboxylate: step 1/2. This is Phosphoribosylaminoimidazole-succinocarboxamide synthase from Geobacter metallireducens (strain ATCC 53774 / DSM 7210 / GS-15).